We begin with the raw amino-acid sequence, 86 residues long: Kappa-theraphotoxin-Cg1a 4 (86 aa).

Positions 1-21 (MKASVLITLAVLGVMFVWASA) are cleaved as a signal peptide. Positions 22 to 50 (AELEERGSDQRDSPAWLKSMERIFQSEER) are excised as a propeptide. 3 cysteine pairs are disulfide-bonded: C52–C66, C59–C71, and C65–C78. Phenylalanine amide is present on F84.

This sequence belongs to the neurotoxin 10 (Hwtx-1) family. 28 (Jztx-11) subfamily. In terms of tissue distribution, expressed by the venom gland.

It localises to the secreted. This toxin acts as a voltage-dependent gating-modifier. It inhibits the sodium conductance (IC(50)=124 nM) and slows the fast inactivation (EC(50)=1180 nM) of Nav1.5/SCN5A. It significantly shifts the activation to more depolarized voltages and decreases the deactivation of Nav1.5 currents upon extreme depolarization, but only slightly affects voltage-dependence of steady-state inactivation. In addition, this toxin causes an approximately five-fold decrease in the rate of recovery from inactivation and an approximately 1.9-fold reduction in the closed-state inactivation rate. This toxin integrates the functions of site 3 toxins (alpha-scorpion toxins) with site 4 toxins (beta-scorpion and spider toxins) by targeting multiple sites on Nav1.5. Also shows inhibition of voltage-gated potassium channels (5 uM completely inhibits Kv2.1/KCNB1, whereas 5 uM moderately inhibits Kv4.2/KCND2 Kv4.1/KCND1 channels). This is Kappa-theraphotoxin-Cg1a 4 from Chilobrachys guangxiensis (Chinese earth tiger tarantula).